Here is a 362-residue protein sequence, read N- to C-terminus: Protein ABHD12B (362 aa).

This sequence belongs to the serine esterase family.

The protein is Protein ABHD12B of Homo sapiens (Human).